The following is an 87-amino-acid chain: Translation initiation factor IF-1 2 (87 aa).

Residues 1–72 (MAKEELIELN…TKGRINFRHK (72 aa)) form the S1-like domain. The segment at 66–87 (RINFRHKDERSGPPSRPPQHRR) is disordered.

This sequence belongs to the IF-1 family. As to quaternary structure, component of the 30S ribosomal translation pre-initiation complex which assembles on the 30S ribosome in the order IF-2 and IF-3, IF-1 and N-formylmethionyl-tRNA(fMet); mRNA recruitment can occur at any time during PIC assembly.

It localises to the cytoplasm. One of the essential components for the initiation of protein synthesis. Stabilizes the binding of IF-2 and IF-3 on the 30S subunit to which N-formylmethionyl-tRNA(fMet) subsequently binds. Helps modulate mRNA selection, yielding the 30S pre-initiation complex (PIC). Upon addition of the 50S ribosomal subunit IF-1, IF-2 and IF-3 are released leaving the mature 70S translation initiation complex. This is Translation initiation factor IF-1 2 from Bordetella parapertussis (strain 12822 / ATCC BAA-587 / NCTC 13253).